Consider the following 529-residue polypeptide: Bifunctional purine biosynthesis protein PurH (529 aa).

The 148-residue stretch at 1-148 folds into the MGS-like domain; that stretch reads MQQRRPIRRA…KNHKDVAIVV (148 aa).

Belongs to the PurH family.

It catalyses the reaction (6R)-10-formyltetrahydrofolate + 5-amino-1-(5-phospho-beta-D-ribosyl)imidazole-4-carboxamide = 5-formamido-1-(5-phospho-D-ribosyl)imidazole-4-carboxamide + (6S)-5,6,7,8-tetrahydrofolate. The enzyme catalyses IMP + H2O = 5-formamido-1-(5-phospho-D-ribosyl)imidazole-4-carboxamide. It participates in purine metabolism; IMP biosynthesis via de novo pathway; 5-formamido-1-(5-phospho-D-ribosyl)imidazole-4-carboxamide from 5-amino-1-(5-phospho-D-ribosyl)imidazole-4-carboxamide (10-formyl THF route): step 1/1. The protein operates within purine metabolism; IMP biosynthesis via de novo pathway; IMP from 5-formamido-1-(5-phospho-D-ribosyl)imidazole-4-carboxamide: step 1/1. The protein is Bifunctional purine biosynthesis protein PurH of Yersinia pseudotuberculosis serotype IB (strain PB1/+).